The sequence spans 482 residues: Bifunctional protein GlmU (482 aa).

The tract at residues 1–238 (MSAIRPAAVV…HREIAGINNR (238 aa)) is pyrophosphorylase. Residues 12 to 15 (LAAG), Lys26, Gln79, and 84 to 85 (GT) each bind UDP-N-acetyl-alpha-D-glucosamine. Asp110 serves as a coordination point for Mg(2+). Gly147, Glu163, Asn178, and Asn236 together coordinate UDP-N-acetyl-alpha-D-glucosamine. Asn236 is a Mg(2+) binding site. The tract at residues 239–259 (VQLAEARRILNDRLLTGAMLA) is linker. The tract at residues 260–482 (GVTVVDPATT…AVSREADGED (223 aa)) is N-acetyltransferase. 2 residues coordinate UDP-N-acetyl-alpha-D-glucosamine: Arg341 and Lys359. His371 (proton acceptor) is an active-site residue. 2 residues coordinate UDP-N-acetyl-alpha-D-glucosamine: Tyr374 and Asn385. Residues Ala388, 394-395 (NY), Ser413, Ala431, and Arg448 each bind acetyl-CoA. The segment at 460–482 (RKRPGSAAAKAAEAVSREADGED) is disordered. The segment covering 464-473 (GSAAAKAAEA) has biased composition (low complexity).

This sequence in the N-terminal section; belongs to the N-acetylglucosamine-1-phosphate uridyltransferase family. It in the C-terminal section; belongs to the transferase hexapeptide repeat family. In terms of assembly, homotrimer. It depends on Mg(2+) as a cofactor.

It localises to the cytoplasm. It carries out the reaction alpha-D-glucosamine 1-phosphate + acetyl-CoA = N-acetyl-alpha-D-glucosamine 1-phosphate + CoA + H(+). It catalyses the reaction N-acetyl-alpha-D-glucosamine 1-phosphate + UTP + H(+) = UDP-N-acetyl-alpha-D-glucosamine + diphosphate. The protein operates within nucleotide-sugar biosynthesis; UDP-N-acetyl-alpha-D-glucosamine biosynthesis; N-acetyl-alpha-D-glucosamine 1-phosphate from alpha-D-glucosamine 6-phosphate (route II): step 2/2. Its pathway is nucleotide-sugar biosynthesis; UDP-N-acetyl-alpha-D-glucosamine biosynthesis; UDP-N-acetyl-alpha-D-glucosamine from N-acetyl-alpha-D-glucosamine 1-phosphate: step 1/1. It functions in the pathway bacterial outer membrane biogenesis; LPS lipid A biosynthesis. Catalyzes the last two sequential reactions in the de novo biosynthetic pathway for UDP-N-acetylglucosamine (UDP-GlcNAc). The C-terminal domain catalyzes the transfer of acetyl group from acetyl coenzyme A to glucosamine-1-phosphate (GlcN-1-P) to produce N-acetylglucosamine-1-phosphate (GlcNAc-1-P), which is converted into UDP-GlcNAc by the transfer of uridine 5-monophosphate (from uridine 5-triphosphate), a reaction catalyzed by the N-terminal domain. The chain is Bifunctional protein GlmU from Streptomyces coelicolor (strain ATCC BAA-471 / A3(2) / M145).